The primary structure comprises 267 residues: Ribosomal RNA small subunit methyltransferase A (267 aa).

S-adenosyl-L-methionine-binding residues include Asn16, Leu18, Gly43, Glu64, Asp88, and Asn109.

It belongs to the class I-like SAM-binding methyltransferase superfamily. rRNA adenine N(6)-methyltransferase family. RsmA subfamily.

It localises to the cytoplasm. The catalysed reaction is adenosine(1518)/adenosine(1519) in 16S rRNA + 4 S-adenosyl-L-methionine = N(6)-dimethyladenosine(1518)/N(6)-dimethyladenosine(1519) in 16S rRNA + 4 S-adenosyl-L-homocysteine + 4 H(+). Its function is as follows. Specifically dimethylates two adjacent adenosines (A1518 and A1519) in the loop of a conserved hairpin near the 3'-end of 16S rRNA in the 30S particle. May play a critical role in biogenesis of 30S subunits. The sequence is that of Ribosomal RNA small subunit methyltransferase A from Acidithiobacillus ferrooxidans (strain ATCC 23270 / DSM 14882 / CIP 104768 / NCIMB 8455) (Ferrobacillus ferrooxidans (strain ATCC 23270)).